The sequence spans 582 residues: ATP-dependent lipid A-core flippase (582 aa).

5 consecutive transmembrane segments (helical) span residues 16-36 (LWPMISPFKAGLAVAAIALII), 63-83 (VLLWMPLVVIGLMLVRGASGF), 153-173 (IIGLFILMFYYSWQLSIILIV), 253-273 (PIIQLIASLALAFVLYAASFP), and 275-295 (VMETLTAGTITVVFSSMIALM). The ABC transmembrane type-1 domain maps to 28–310 (AVAAIALIIN…LTNVNAQFQR (283 aa)). Residues 342 to 578 (LEFRQVNFAY…NGAYAQLHRM (237 aa)) enclose the ABC transporter domain. 376–383 (GRSGSGKS) contacts ATP.

The protein belongs to the ABC transporter superfamily. Lipid exporter (TC 3.A.1.106) family. Homodimer.

It is found in the cell inner membrane. It catalyses the reaction ATP + H2O + lipid A-core oligosaccharideSide 1 = ADP + phosphate + lipid A-core oligosaccharideSide 2.. Involved in lipopolysaccharide (LPS) biosynthesis. Translocates lipid A-core from the inner to the outer leaflet of the inner membrane. Transmembrane domains (TMD) form a pore in the inner membrane and the ATP-binding domain (NBD) is responsible for energy generation. In Pectobacterium atrosepticum (strain SCRI 1043 / ATCC BAA-672) (Erwinia carotovora subsp. atroseptica), this protein is ATP-dependent lipid A-core flippase.